Reading from the N-terminus, the 295-residue chain is Pyridoxal 5'-phosphate synthase subunit PdxS (295 aa).

Asp-25 provides a ligand contact to D-ribose 5-phosphate. Residue Lys-82 is the Schiff-base intermediate with D-ribose 5-phosphate of the active site. Gly-154 contacts D-ribose 5-phosphate. Arg-166 contributes to the D-glyceraldehyde 3-phosphate binding site. D-ribose 5-phosphate-binding positions include Gly-215 and 236 to 237 (GS).

It belongs to the PdxS/SNZ family. In the presence of PdxT, forms a dodecamer of heterodimers.

It catalyses the reaction aldehydo-D-ribose 5-phosphate + D-glyceraldehyde 3-phosphate + L-glutamine = pyridoxal 5'-phosphate + L-glutamate + phosphate + 3 H2O + H(+). It participates in cofactor biosynthesis; pyridoxal 5'-phosphate biosynthesis. Functionally, catalyzes the formation of pyridoxal 5'-phosphate from ribose 5-phosphate (RBP), glyceraldehyde 3-phosphate (G3P) and ammonia. The ammonia is provided by the PdxT subunit. Can also use ribulose 5-phosphate and dihydroxyacetone phosphate as substrates, resulting from enzyme-catalyzed isomerization of RBP and G3P, respectively. The chain is Pyridoxal 5'-phosphate synthase subunit PdxS from Staphylococcus epidermidis (strain ATCC 35984 / DSM 28319 / BCRC 17069 / CCUG 31568 / BM 3577 / RP62A).